We begin with the raw amino-acid sequence, 528 residues long: Na(+)/H(+) antiporter NhaB (528 aa).

10 helical membrane passes run 25-47 (IISFLVINPIVFYFNPFIAGWLL), 66-86 (PGGLLAIEAVAIGMTSPSQVL), 97-117 (LLLVFMVAGIYFMKQLLLFVF), 130-164 (VSLLFCVSSAFLSAFLDALTVIAVIITVAVGFYSI), 241-261 (IRMSPVTVPVFFAGVTTCFLV), 304-324 (AFIGVWLIAGLALHLASVGLI), 351-371 (ALPFTALLAVFFAIVAVIIDL), 390-410 (LVVFYIANGLLSMVSDNVFVG), 448-468 (ATPNGQAAFLFLLTSAIAPLI), and 476-496 (VWMALPYTIVLSIVGVLAIQL).

This sequence belongs to the NhaB Na(+)/H(+) (TC 2.A.34) antiporter family.

It localises to the cell inner membrane. The enzyme catalyses 2 Na(+)(in) + 3 H(+)(out) = 2 Na(+)(out) + 3 H(+)(in). Functionally, na(+)/H(+) antiporter that extrudes sodium in exchange for external protons. In Shewanella halifaxensis (strain HAW-EB4), this protein is Na(+)/H(+) antiporter NhaB.